The sequence spans 438 residues: Na(+)/H(+) antiporter NhaA (438 aa).

A run of 11 helical transmembrane segments spans residues 23–43, 62–82, 104–124, 133–153, 162–182, 185–205, 212–232, 302–322, 337–357, 372–392, and 410–430; these read FGGI…NSFL, FFIG…LFFL, SFPV…YFFL, GFGI…MLLG, VFLI…IALF, TNLK…LAVL, SLIP…QSGI, FLAP…NAGV, LGVI…ITFI, WWHI…SMFI, and IAIL…LFVL.

Belongs to the NhaA Na(+)/H(+) (TC 2.A.33) antiporter family.

The protein localises to the cell inner membrane. It carries out the reaction Na(+)(in) + 2 H(+)(out) = Na(+)(out) + 2 H(+)(in). Its function is as follows. Na(+)/H(+) antiporter that extrudes sodium in exchange for external protons. This is Na(+)/H(+) antiporter NhaA from Helicobacter pylori (strain G27).